The primary structure comprises 255 residues: Thiazole synthase (255 aa).

The Schiff-base intermediate with DXP role is filled by Lys-96. 1-deoxy-D-xylulose 5-phosphate is bound by residues Gly-157, 183 to 184 (AG), and 205 to 206 (NT).

The protein belongs to the ThiG family. As to quaternary structure, homotetramer. Forms heterodimers with either ThiH or ThiS.

Its subcellular location is the cytoplasm. It carries out the reaction [ThiS sulfur-carrier protein]-C-terminal-Gly-aminoethanethioate + 2-iminoacetate + 1-deoxy-D-xylulose 5-phosphate = [ThiS sulfur-carrier protein]-C-terminal Gly-Gly + 2-[(2R,5Z)-2-carboxy-4-methylthiazol-5(2H)-ylidene]ethyl phosphate + 2 H2O + H(+). It participates in cofactor biosynthesis; thiamine diphosphate biosynthesis. Functionally, catalyzes the rearrangement of 1-deoxy-D-xylulose 5-phosphate (DXP) to produce the thiazole phosphate moiety of thiamine. Sulfur is provided by the thiocarboxylate moiety of the carrier protein ThiS. In vitro, sulfur can be provided by H(2)S. This is Thiazole synthase from Bacillus pumilus (strain SAFR-032).